A 342-amino-acid chain; its full sequence is S-adenosylmethionine:tRNA ribosyltransferase-isomerase (342 aa).

It belongs to the QueA family. Monomer.

The protein localises to the cytoplasm. It catalyses the reaction 7-aminomethyl-7-carbaguanosine(34) in tRNA + S-adenosyl-L-methionine = epoxyqueuosine(34) in tRNA + adenine + L-methionine + 2 H(+). Its pathway is tRNA modification; tRNA-queuosine biosynthesis. Transfers and isomerizes the ribose moiety from AdoMet to the 7-aminomethyl group of 7-deazaguanine (preQ1-tRNA) to give epoxyqueuosine (oQ-tRNA). The protein is S-adenosylmethionine:tRNA ribosyltransferase-isomerase of Bacillus pumilus (strain SAFR-032).